We begin with the raw amino-acid sequence, 172 residues long: 5'(3')-deoxyribonucleotidase (172 aa).

D8 functions as the Nucleophile in the catalytic mechanism. Mg(2+) contacts are provided by D8, D10, and D132. Catalysis depends on D10, which acts as the Proton donor.

The protein belongs to the 5'(3')-deoxyribonucleotidase family. Requires Mg(2+) as cofactor.

Functionally, dephosphorylates nucleoside monophosphates such as the 5' and 2'(3')-phosphates of deoxyribonucleotides in vitro. Also catalyzes the dephosphorylation of coenzyme A (CoA), pyridoxal-5'-phosphate (PLP), riboflavine-5-phosphate (FMN) and nicotinamide adenine dinucleotide phosphate (NADP) in vitro. The polypeptide is 5'(3')-deoxyribonucleotidase (yorS) (Bacillus subtilis (strain 168)).